The sequence spans 893 residues: Translation initiation factor IF-2 (893 aa).

The tract at residues 49 to 303 (LNREAGSGPD…KGSSLQQGFQ (255 aa)) is disordered. Residues 68-82 (STLNIPGTGGKSKSV) show a composition bias toward polar residues. 2 stretches are compositionally biased toward basic and acidic residues: residues 93-159 (VKRD…KDKV) and 166-216 (DMTK…EENK). Positions 254–269 (GRGRNAKAARPAKKGN) are enriched in basic residues. The span at 270-283 (KHAESKADREEARA) shows a compositional bias: basic and acidic residues. Residues 392–561 (PRAPVVTIMG…LLQAEVLELK (170 aa)) enclose the tr-type G domain. A G1 region spans residues 401-408 (GHVDHGKT). 401-408 (GHVDHGKT) provides a ligand contact to GTP. Residues 426–430 (GITQH) form a G2 region. A G3 region spans residues 447-450 (DTPG). GTP-binding positions include 447–451 (DTPGH) and 501–504 (NKID). Residues 501-504 (NKID) form a G4 region. Positions 537–539 (SAK) are G5.

Belongs to the TRAFAC class translation factor GTPase superfamily. Classic translation factor GTPase family. IF-2 subfamily.

It localises to the cytoplasm. One of the essential components for the initiation of protein synthesis. Protects formylmethionyl-tRNA from spontaneous hydrolysis and promotes its binding to the 30S ribosomal subunits. Also involved in the hydrolysis of GTP during the formation of the 70S ribosomal complex. The polypeptide is Translation initiation factor IF-2 (Salmonella arizonae (strain ATCC BAA-731 / CDC346-86 / RSK2980)).